A 74-amino-acid polypeptide reads, in one-letter code: Cytochrome c oxidase subunit 2 (74 aa).

At 1–14 the chain is on the mitochondrial intermembrane side; the sequence is MAHPMQLGFQDAAS. The helical transmembrane segment at 15 to 45 threads the bilayer; the sequence is PVMEELLHFHDHALMIVFLISTAVLYIIVVT. Residues 46–74 are Mitochondrial matrix-facing; that stretch reads VTTKLTDKYVLDAQEIEMVWTIMPAVVLI.

It belongs to the cytochrome c oxidase subunit 2 family. Component of the cytochrome c oxidase (complex IV, CIV), a multisubunit enzyme composed of 14 subunits. The complex is composed of a catalytic core of 3 subunits MT-CO1, MT-CO2 and MT-CO3, encoded in the mitochondrial DNA, and 11 supernumerary subunits COX4I, COX5A, COX5B, COX6A, COX6B, COX6C, COX7A, COX7B, COX7C, COX8 and NDUFA4, which are encoded in the nuclear genome. The complex exists as a monomer or a dimer and forms supercomplexes (SCs) in the inner mitochondrial membrane with NADH-ubiquinone oxidoreductase (complex I, CI) and ubiquinol-cytochrome c oxidoreductase (cytochrome b-c1 complex, complex III, CIII), resulting in different assemblies (supercomplex SCI(1)III(2)IV(1) and megacomplex MCI(2)III(2)IV(2)). Found in a complex with TMEM177, COA6, COX18, COX20, SCO1 and SCO2. Interacts with TMEM177 in a COX20-dependent manner. Interacts with COX20. Interacts with COX16. The cofactor is Cu cation.

The protein resides in the mitochondrion inner membrane. The catalysed reaction is 4 Fe(II)-[cytochrome c] + O2 + 8 H(+)(in) = 4 Fe(III)-[cytochrome c] + 2 H2O + 4 H(+)(out). In terms of biological role, component of the cytochrome c oxidase, the last enzyme in the mitochondrial electron transport chain which drives oxidative phosphorylation. The respiratory chain contains 3 multisubunit complexes succinate dehydrogenase (complex II, CII), ubiquinol-cytochrome c oxidoreductase (cytochrome b-c1 complex, complex III, CIII) and cytochrome c oxidase (complex IV, CIV), that cooperate to transfer electrons derived from NADH and succinate to molecular oxygen, creating an electrochemical gradient over the inner membrane that drives transmembrane transport and the ATP synthase. Cytochrome c oxidase is the component of the respiratory chain that catalyzes the reduction of oxygen to water. Electrons originating from reduced cytochrome c in the intermembrane space (IMS) are transferred via the dinuclear copper A center (CU(A)) of subunit 2 and heme A of subunit 1 to the active site in subunit 1, a binuclear center (BNC) formed by heme A3 and copper B (CU(B)). The BNC reduces molecular oxygen to 2 water molecules using 4 electrons from cytochrome c in the IMS and 4 protons from the mitochondrial matrix. This Amia calva (Bowfin) protein is Cytochrome c oxidase subunit 2 (mt-co2).